The chain runs to 225 residues: Cytidylate kinase (225 aa).

11–19 is a binding site for ATP; the sequence is GPAAAGKST.

Belongs to the cytidylate kinase family. Type 1 subfamily.

The protein localises to the cytoplasm. It carries out the reaction CMP + ATP = CDP + ADP. The enzyme catalyses dCMP + ATP = dCDP + ADP. In Anoxybacillus flavithermus (strain DSM 21510 / WK1), this protein is Cytidylate kinase.